Here is a 219-residue protein sequence, read N- to C-terminus: ATP-dependent dethiobiotin synthetase BioD (219 aa).

Residue 12–17 participates in ATP binding; it reads GVGKTI. Thr-16 serves as a coordination point for Mg(2+). Lys-32 is an active-site residue. Residues Asp-43 and 96–99 contribute to the ATP site; that span reads ETSG. Positions 43 and 96 each coordinate Mg(2+).

It belongs to the dethiobiotin synthetase family. In terms of assembly, homodimer. Mg(2+) serves as cofactor.

The protein localises to the cytoplasm. The enzyme catalyses (7R,8S)-7,8-diammoniononanoate + CO2 + ATP = (4R,5S)-dethiobiotin + ADP + phosphate + 3 H(+). It participates in cofactor biosynthesis; biotin biosynthesis; biotin from 7,8-diaminononanoate: step 1/2. Catalyzes a mechanistically unusual reaction, the ATP-dependent insertion of CO2 between the N7 and N8 nitrogen atoms of 7,8-diaminopelargonic acid (DAPA, also called 7,8-diammoniononanoate) to form a ureido ring. The protein is ATP-dependent dethiobiotin synthetase BioD of Chlamydia pneumoniae (Chlamydophila pneumoniae).